Reading from the N-terminus, the 522-residue chain is Cytochrome P450 714C2 (522 aa).

The Lumenal portion of the chain corresponds to 1–11 (MELFSSQQWLA). The chain crosses the membrane as a helical; Signal-anchor for type III membrane protein span at residues 12-32 (LLPPIILCILLFSYVYIILWL). At 33 to 522 (RPERLRQKLR…KGVPLIFREL (490 aa)) the chain is on the cytoplasmic side. Cys-470 contacts heme.

It belongs to the cytochrome P450 family. Heme is required as a cofactor.

It is found in the membrane. Its function is as follows. Probably not involved in gibberellin metabolism since over-expression of CYP714C2 in a heterologous system does not induce semi-dwarfism. The sequence is that of Cytochrome P450 714C2 (CYP714C2) from Oryza sativa subsp. japonica (Rice).